Reading from the N-terminus, the 126-residue chain is Large ribosomal subunit protein bL12 (126 aa).

It belongs to the bacterial ribosomal protein bL12 family. In terms of assembly, homodimer. Part of the ribosomal stalk of the 50S ribosomal subunit. Forms a multimeric L10(L12)X complex, where L10 forms an elongated spine to which 2 to 4 L12 dimers bind in a sequential fashion. Binds GTP-bound translation factors.

In terms of biological role, forms part of the ribosomal stalk which helps the ribosome interact with GTP-bound translation factors. Is thus essential for accurate translation. The chain is Large ribosomal subunit protein bL12 from Corynebacterium diphtheriae (strain ATCC 700971 / NCTC 13129 / Biotype gravis).